Here is a 361-residue protein sequence, read N- to C-terminus: Phospho-N-acetylmuramoyl-pentapeptide-transferase (361 aa).

10 consecutive transmembrane segments (helical) span residues 27 to 47, 72 to 92, 99 to 119, 135 to 155, 169 to 189, 200 to 220, 240 to 260, 264 to 284, 289 to 309, and 338 to 358; these read GALF…ISLL, TPTM…LLWA, VWVT…DDYL, LALE…YSPA, ALLN…VGAG, GLAI…AYLV, LAVV…FNAP, IFMG…IAVA, IVLA…IIQV, and QVVI…LATL.

The protein belongs to the glycosyltransferase 4 family. MraY subfamily. It depends on Mg(2+) as a cofactor.

The protein resides in the cell inner membrane. The catalysed reaction is UDP-N-acetyl-alpha-D-muramoyl-L-alanyl-gamma-D-glutamyl-meso-2,6-diaminopimeloyl-D-alanyl-D-alanine + di-trans,octa-cis-undecaprenyl phosphate = di-trans,octa-cis-undecaprenyl diphospho-N-acetyl-alpha-D-muramoyl-L-alanyl-D-glutamyl-meso-2,6-diaminopimeloyl-D-alanyl-D-alanine + UMP. The protein operates within cell wall biogenesis; peptidoglycan biosynthesis. Catalyzes the initial step of the lipid cycle reactions in the biosynthesis of the cell wall peptidoglycan: transfers peptidoglycan precursor phospho-MurNAc-pentapeptide from UDP-MurNAc-pentapeptide onto the lipid carrier undecaprenyl phosphate, yielding undecaprenyl-pyrophosphoryl-MurNAc-pentapeptide, known as lipid I. The chain is Phospho-N-acetylmuramoyl-pentapeptide-transferase from Methylobacterium radiotolerans (strain ATCC 27329 / DSM 1819 / JCM 2831 / NBRC 15690 / NCIMB 10815 / 0-1).